The primary structure comprises 565 residues: Thiol:disulfide interchange protein DsbD (565 aa).

A signal peptide spans 1–19; the sequence is MAQRIFTLILLLCSTSVFA. Intrachain disulfides connect cysteine 122/cysteine 128 and cysteine 182/cysteine 304. 7 helical membrane passes run 163–183, 208–228, 243–263, 289–309, 323–343, 357–377, and 384–404; these read LPFS…TPCV, LLTF…GLVV, YVLI…FGLF, GVFI…TAPL, WLGG…LMLI, WMEQ…VFLL, and IWGL…AFIT. The Thioredoxin domain occupies 434–565; the sequence is WAFGETHTAQ…FSAHLRDRQP (132 aa). An intrachain disulfide couples cysteine 480 to cysteine 483.

This sequence belongs to the thioredoxin family. DsbD subfamily.

The protein localises to the cell inner membrane. The catalysed reaction is [protein]-dithiol + NAD(+) = [protein]-disulfide + NADH + H(+). The enzyme catalyses [protein]-dithiol + NADP(+) = [protein]-disulfide + NADPH + H(+). Functionally, required to facilitate the formation of correct disulfide bonds in some periplasmic proteins and for the assembly of the periplasmic c-type cytochromes. Acts by transferring electrons from cytoplasmic thioredoxin to the periplasm. This transfer involves a cascade of disulfide bond formation and reduction steps. The protein is Thiol:disulfide interchange protein DsbD of Escherichia coli O6:K15:H31 (strain 536 / UPEC).